Consider the following 208-residue polypeptide: Small ribosomal subunit protein uS4 (208 aa).

An S4 RNA-binding domain is found at 98 to 160 (CRLDNVVYRM…AKKQSRIQLA (63 aa)).

This sequence belongs to the universal ribosomal protein uS4 family. As to quaternary structure, part of the 30S ribosomal subunit. Contacts protein S5. The interaction surface between S4 and S5 is involved in control of translational fidelity.

One of the primary rRNA binding proteins, it binds directly to 16S rRNA where it nucleates assembly of the body of the 30S subunit. Functionally, with S5 and S12 plays an important role in translational accuracy. The polypeptide is Small ribosomal subunit protein uS4 (Ruthia magnifica subsp. Calyptogena magnifica).